A 260-amino-acid chain; its full sequence is Pyridoxine 5'-phosphate synthase (260 aa).

Asn-6 contributes to the 3-amino-2-oxopropyl phosphate binding site. 8 to 9 (DH) is a binding site for 1-deoxy-D-xylulose 5-phosphate. Arg-17 is a binding site for 3-amino-2-oxopropyl phosphate. Residue His-42 is the Proton acceptor of the active site. Arg-44 and His-49 together coordinate 1-deoxy-D-xylulose 5-phosphate. Catalysis depends on Glu-69, which acts as the Proton acceptor. Thr-99 contributes to the 1-deoxy-D-xylulose 5-phosphate binding site. His-213 functions as the Proton donor in the catalytic mechanism. Residues Gly-214 and 235–236 (GQ) contribute to the 3-amino-2-oxopropyl phosphate site.

The protein belongs to the PNP synthase family. As to quaternary structure, homooctamer; tetramer of dimers.

The protein resides in the cytoplasm. It catalyses the reaction 3-amino-2-oxopropyl phosphate + 1-deoxy-D-xylulose 5-phosphate = pyridoxine 5'-phosphate + phosphate + 2 H2O + H(+). The protein operates within cofactor biosynthesis; pyridoxine 5'-phosphate biosynthesis; pyridoxine 5'-phosphate from D-erythrose 4-phosphate: step 5/5. Its function is as follows. Catalyzes the complicated ring closure reaction between the two acyclic compounds 1-deoxy-D-xylulose-5-phosphate (DXP) and 3-amino-2-oxopropyl phosphate (1-amino-acetone-3-phosphate or AAP) to form pyridoxine 5'-phosphate (PNP) and inorganic phosphate. The polypeptide is Pyridoxine 5'-phosphate synthase (Sulfurimonas denitrificans (strain ATCC 33889 / DSM 1251) (Thiomicrospira denitrificans (strain ATCC 33889 / DSM 1251))).